A 3535-amino-acid polypeptide reads, in one-letter code: Lysosomal-trafficking regulator (3535 aa).

The segment at 412–436 (MESSASTAMPKQQQHPRHKRQRSSQ) is disordered. Residues 689–736 (TLSRRLIQLQLNSSDRASQLFQALLYKCSKHSRAKFWLDESSTPAKLE) form a WD 1 repeat. Residues 1066 to 1096 (STHQEPTGVVNSPSGDSQQPRPRARSFNSGS) are compositionally biased toward polar residues. Disordered regions lie at residues 1066-1132 (STHQ…NAGV) and 1592-1613 (GEGQ…TLDG). Residues 1596 to 1610 (PTGRSPGSSSSSRST) show a composition bias toward low complexity. The region spanning 2686-2784 (SLNSQILYNF…MREVFCDKIV (99 aa)) is the BEACH-type PH domain. In terms of domain architecture, BEACH spans 2784–3081 (VATPDQSKVI…QLFKSPHPAS (298 aa)). Residues 3254–3287 (GIGGGGSERVDEAGNLHPTSSASSVNSSSISSGG) form a disordered region. Low complexity predominate over residues 3273–3285 (SSASSVNSSSISS). 3 WD repeats span residues 3307–3346 (RHTD…YVRT), 3442–3486 (VHED…FVSE), and 3489–3527 (TGTS…GNAP).

Interacts with Rab5; the interaction is independent of GDP or GTP. Interacts with msps.

Its subcellular location is the vesicle. The protein resides in the cytoplasm. It is found in the cytoskeleton. The protein localises to the spindle. It localises to the spindle pole. Functionally, adapter protein that regulates intracellular membrane fusion reactions. Regulates the fusion of lysosome-related organelles. Promotes microtubules nucleation and centrosomal recruitment of microtubule nucleating proteins such as msps. In syncytial embryos, during the formation of yolk granules, suppresses vesicle fusion events with lipid droplets, possibly via interaction with Rab5. In the eye, regulates pigment granules size. In hemocytes, required for the late steps of bacteria phagocytosis. In fat body, required for autophagosome maturation. This chain is Lysosomal-trafficking regulator, found in Drosophila melanogaster (Fruit fly).